The sequence spans 290 residues: Protein male abnormal 3 (290 aa).

2 consecutive DNA-binding regions (DM) follow at residues 28–74 (CQRC…SKKK) and 94–142 (CARC…KLRR). Disordered stretches follow at residues 139-167 (KLRR…MDME) and 179-202 (IIGT…LSMS). Residues 146-155 (KSRDGKEPKR) show a composition bias toward basic and acidic residues. The span at 182–202 (TSASPSPSSTTDTMSPSLSMS) shows a compositional bias: low complexity.

Expression is undetectable in hermaphrodites, but persists in males. In males, expressed in cells of the tail tip.

The protein localises to the nucleus. Its function is as follows. Transcription factor which binds the DNA motif 5'-[CGA][TCA][TA]ACAATGT[AT][TGA]C-3', probably as a monomer. Acts partially redundantly with the transcription factor dmd-3 to coordinate tail tip cell fusion and retraction and thereby regulate male tail tip morphogenesis. Promotes male-specific development of two tissues, the peripheral nervous system and the intestine. In the peripheral nervous system, directs differentiation of sensory ray neuroblasts into peripheral sense organs. In the intestine, causes repression of vitellogenin gene transcription. This Caenorhabditis elegans protein is Protein male abnormal 3.